We begin with the raw amino-acid sequence, 129 residues long: Small ribosomal subunit protein uS11 (129 aa).

The protein belongs to the universal ribosomal protein uS11 family. Part of the 30S ribosomal subunit. Interacts with proteins S7 and S18. Binds to IF-3.

In terms of biological role, located on the platform of the 30S subunit, it bridges several disparate RNA helices of the 16S rRNA. Forms part of the Shine-Dalgarno cleft in the 70S ribosome. The polypeptide is Small ribosomal subunit protein uS11 (Sodalis glossinidius (strain morsitans)).